Reading from the N-terminus, the 509-residue chain is L-aspartate semialdehyde sulfurtransferase (509 aa).

The active-site Cysteine persulfide intermediate is the Cys-133. CBS domains lie at 394 to 450 (LSKP…NKKT) and 455 to 509 (MTRN…GGKK). Positions 395, 399, and 421 each coordinate S-methyl-5'-thioadenosine. S-adenosyl-L-methionine is bound by residues Asp-439, Thr-456, Ile-460, and 479–482 (NISG). S-methyl-5'-thioadenosine is bound at residue 497–500 (TSED).

The protein belongs to the L-aspartate semialdehyde sulfurtransferase family. In terms of assembly, homodimer. May form a complex with MJ0099.

It catalyses the reaction L-aspartate 4-semialdehyde + reduced 2[4Fe-4S]-[ferredoxin] + hydrogen sulfide + 3 H(+) = oxidized 2[4Fe-4S]-[ferredoxin] + L-homocysteine + H2O. It participates in amino-acid biosynthesis. The ligand-induced conformational reorganization of the protein could be an important regulatory mechanism. In terms of biological role, required for O-acetylhomoserine sulfhydrylase (OAHS)-independent homocysteine (Hcy) biosynthesis. Together with MJ0099, catalyzes the condensation of sulfide with aspartate semialdehyde to generate homocysteine. Likely functions through persulfide intermediate. In Methanocaldococcus jannaschii (strain ATCC 43067 / DSM 2661 / JAL-1 / JCM 10045 / NBRC 100440) (Methanococcus jannaschii), this protein is L-aspartate semialdehyde sulfurtransferase.